Reading from the N-terminus, the 140-residue chain is Protein BIC1 (140 aa).

Positions 1–10 (MMNIDDTTSP) are enriched in polar residues. Residues 1-71 (MMNIDDTTSP…RVDTGRERLK (71 aa)) form a disordered region. A compositionally biased stretch (basic and acidic residues) spans 42-68 (ADKKDLALLEEKPKQSQEEDRVDTGRE).

Interacts with CRY2 in both darkness and light.

It is found in the nucleus. Functionally, regulates the blue-light dependent dimerization of CRY2 and formation of photobodies. Interacts with photoexited CRY2 to inhibit its activity. Inhibits CRY phosphorylation. This is Protein BIC1 from Arabidopsis thaliana (Mouse-ear cress).